The primary structure comprises 36 residues: Kappa-actitoxin-Avd6a (36 aa).

A ShKT domain is found at 2–36 (CKDNFAAATCKHVKENKNCGSQKYATNCAKTCGKC). Cystine bridges form between Cys2–Cys36, Cys11–Cys29, and Cys20–Cys33. Residues 24–25 (KY) form a crucial for binding to potassium channels region.

The protein belongs to the sea anemone type 1 potassium channel toxin family. Type 1b subfamily.

The protein resides in the secreted. It is found in the nematocyst. In terms of biological role, blocks voltage-gated potassium channels Kv1.2/KCNA2 (IC(50)=140 nM). This Anemonia sulcata (Mediterranean snakelocks sea anemone) protein is Kappa-actitoxin-Avd6a.